Reading from the N-terminus, the 310-residue chain is Protein LRATD2 (310 aa).

The disordered stretch occupies residues 1–76 (MGNQVEKLTH…PPPQPQPYDP (76 aa)). Over residues 54–64 (PDGGGLPDGGD) the composition is skewed to gly residues. Residues 65–74 (GPPPPQPQPY) are compositionally biased toward pro residues. One can recognise an LRAT domain in the interval 122–217 (VEFVSQAQYP…CRYGKREFKI (96 aa)). A disordered region spans residues 274–310 (HPAEPEEGDSNVARTTPPPGRPPAPSSEEEDGEAVAH). Over residues 289–298 (TPPPGRPPAP) the composition is skewed to pro residues. Residues 300–310 (SEEEDGEAVAH) are compositionally biased toward acidic residues.

It belongs to the LRATD family. Expressed in esophageal squamous cell carcinomas.

The sequence is that of Protein LRATD2 from Homo sapiens (Human).